The sequence spans 165 residues: MPPKFDPTEIKIVYLRCVGGEVGATSALAPKVGPLGLSPKKIGEDIAKATQDWKGLKVTCKLTIQNRVAKIDVVPSAASLIVKELKEPPRDRKKVKNVKHNGDLTVDTIIKIARIMRPRSMAKKLEGTVKEILGTAQSVGCTIDGQHPHDIIESIANGEIEIPAQ.

This sequence belongs to the universal ribosomal protein uL11 family.

Functionally, binds directly to 26S ribosomal RNA. The polypeptide is Large ribosomal subunit protein uL11 (rpl-12) (Caenorhabditis briggsae).